The sequence spans 644 residues: L-aspartate oxidase 2-a, chloroplastic (644 aa).

FAD-binding positions include 94–97 (SGIA), lysine 116, 123–130 (NTNYAQGG), and aspartate 294. Catalysis depends on arginine 369, which acts as the Proton donor/acceptor. Residues glutamate 454 and 470–471 (SL) each bind FAD.

The protein belongs to the FAD-dependent oxidoreductase 2 family. NadB subfamily. The cofactor is FAD.

It localises to the plastid. Its subcellular location is the chloroplast. The enzyme catalyses L-aspartate + O2 = iminosuccinate + H2O2. Its pathway is alkaloid biosynthesis; nicotine biosynthesis. The protein operates within cofactor biosynthesis; NAD(+) biosynthesis; iminoaspartate from L-aspartate (oxidase route): step 1/1. Its function is as follows. Involved in the biosynthesis of pyridine alkaloid natural products, leading mainly to the production of anabasine, anatabine, nicotine and nornicotine, effective deterrents against herbivores with antiparasitic and pesticide properties (neurotoxins); nornicotine serves as the precursor in the synthesis of the carcinogen compound N'-nitrosonornicotine (NNN). Catalyzes the oxidation of L-aspartate to iminoaspartate. This Nicotiana tabacum (Common tobacco) protein is L-aspartate oxidase 2-a, chloroplastic.